The chain runs to 1218 residues: MEADGAGEQMRPLLTRGPDEEAVVDLGKTSSTVNTKFEKEELESHRAVYVGVHVPFSKESRRRHRHRGHKHHHRRRKDKDSDKEDGRESPSYDTPSQRVQFILGTEDDDEEHIPHDLFTEMDELCYRDGEEYEWKETARWLKFEEDVEDGGDRWSKPYVATLSLHSLFELRSCILNGTVMLDMRASTLDEIADMVLDNMIASGQLDDSIRENVREALLKRHHHQNEKRFTSRIPLVRSFADIGKKHSDPHLLERNGEGLSASRHSLRTGLSASNLSLRGESPLSLLLSHLLPSSRAGTPAGSRCTTPVPTPQNSPPSSPSLSRLTSRSSQQTQPQAPEVLVSPDRDDIPRVVIHPPEEDIEALKGQEQKNEENTDFTPGILASPQSAPGNLDSSKSGEVKGNGSGGSRENSTVDFSKVDMNFMRKIPTGAEASNVLVGEVDFLERPIIAFVRLAPAVLLSGLTEVPVPTRFLFLLLGPAGKAPQYHEIGRSIATLMTDEIFHDVAYKAKDRNDLLSGIDEFLDQVTVLPPGEWDPSIRIEPPKSVPSQEKRKIPAFPNGSAPVSADPPKEADHHAGPELQRTGRLFGGLILDIKRKAPFFLSDFKDALSLQCLASILFLYCACMSPVITFGGLLGEATEGRISAIESLFGASLTGIAYSLFAGQPLTILGSTGPVLVFEKILFKFCRDYHLSYLSLRTSIGLWTSFLCIVLVATDASSLVCYITRFTEEAFAALICIIFIYEALEKLFHLGEIYAFNMHNNLDALTSYTCVCAEPSNPSNETVELWERKNVTAASISWANLTVSECKTFHGMFVGSACGPHGPYVPDVLFWCVVLFFTTFFLSSFLKQFKTKRYFPTKVRSTISDFAVFLTIVIMVAIDYLVGIPSPKLHVPEKFEPTDPSRGWIISPLGDNPWWTLLIAAVPALLCTILIFMDQQITAVIINRKEHKLKKGAGYHLDLLMVAVMLGVCSIMGLPWFVAATVLSISHVNSLKVESECSAPGEQPKFLGIREQRVTGLMIFILMGLSVFMTSVLKFIPMPVLYGVFLYMGVSSLKGIQFFDRIKLFGMPAKHQPDLIYLRYVPLWKVHVFTVVQLTCLVLLWVIKASAAAVVFPMMVLALVFVRKLMDLCFTKRELSWLDDLMPESKKKKEDDKKKKEKEEAERMLQGDGDTVHLPFERGSLLQIPVKTLKYSPEKPVSVTINFEDEPSKKYMDAETSL.

2 disordered regions span residues 1-31 (MEAD…KTSS) and 53-99 (HVPF…SQRV). Residues 1–612 (MEADGAGEQM…DFKDALSLQC (612 aa)) lie on the Extracellular side of the membrane. Residues serine 57, serine 60, serine 89, and serine 155 each carry the phosphoserine modification. The segment covering 60-77 (SRRRHRHRGHKHHHRRRK) has biased composition (basic residues). The span at 78–90 (DKDSDKEDGRESP) shows a compositional bias: basic and acidic residues. An N-linked (GlcNAc...) asparagine glycan is attached at asparagine 176. Phosphoserine is present on residues serine 238, serine 247, and arginine 263. An N-linked (GlcNAc...) asparagine glycan is attached at asparagine 274. 3 disordered regions span residues 294-350 (SRAG…DIPR), 364-412 (KGQE…ENST), and 536-577 (SIRI…HAGP). Residues 308-318 (VPTPQNSPPSS) are compositionally biased toward pro residues. Positions 319–337 (PSLSRLTSRSSQQTQPQAP) are enriched in low complexity. Residues 383-396 (SPQSAPGNLDSSKS) show a composition bias toward polar residues. Residues serine 386, serine 404, and serine 407 each carry the phosphoserine modification. An N-linked (GlcNAc...) asparagine glycan is attached at asparagine 410. 2 positions are modified to phosphoserine: serine 411 and serine 560. The span at 567–576 (PPKEADHHAG) shows a compositional bias: basic and acidic residues. Residues 613–633 (LASILFLYCACMSPVITFGGL) traverse the membrane as a helical segment. The Cytoplasmic segment spans residues 634 to 641 (LGEATEGR). Residues 642-662 (ISAIESLFGASLTGIAYSLFA) traverse the membrane as a helical segment. At 663-699 (GQPLTILGSTGPVLVFEKILFKFCRDYHLSYLSLRTS) the chain is on the extracellular side. Residues 700–720 (IGLWTSFLCIVLVATDASSLV) traverse the membrane as a helical segment. Topologically, residues 721–729 (CYITRFTEE) are cytoplasmic. The helical transmembrane segment at 730-750 (AFAALICIIFIYEALEKLFHL) threads the bilayer. Topologically, residues 751 to 821 (GEIYAFNMHN…MFVGSACGPH (71 aa)) are extracellular. Cysteine 770 and cysteine 772 are oxidised to a cystine. N-linked (GlcNAc...) asparagine glycans are attached at residues asparagine 780, asparagine 790, and asparagine 800. Cysteine 806 and cysteine 818 are oxidised to a cystine. A helical membrane pass occupies residues 822–842 (GPYVPDVLFWCVVLFFTTFFL). The Cytoplasmic portion of the chain corresponds to 843 to 865 (SSFLKQFKTKRYFPTKVRSTISD). A helical membrane pass occupies residues 866-886 (FAVFLTIVIMVAIDYLVGIPS). Residues 887–912 (PKLHVPEKFEPTDPSRGWIISPLGDN) are Extracellular-facing. Residues 913–933 (PWWTLLIAAVPALLCTILIFM) traverse the membrane as a helical segment. Over 934–958 (DQQITAVIINRKEHKLKKGAGYHLD) the chain is Cytoplasmic. The chain crosses the membrane as a helical span at residues 959 to 979 (LLMVAVMLGVCSIMGLPWFVA). Residues 980–1015 (ATVLSISHVNSLKVESECSAPGEQPKFLGIREQRVT) lie on the Extracellular side of the membrane. The tract at residues 1012 to 1135 (QRVTGLMIFI…MDLCFTKREL (124 aa)) is essential for cell membrane localization and transport activity. Residues 1016–1036 (GLMIFILMGLSVFMTSVLKFI) form a helical membrane-spanning segment. The Cytoplasmic portion of the chain corresponds to 1037 to 1038 (PM). The helical transmembrane segment at 1039-1059 (PVLYGVFLYMGVSSLKGIQFF) threads the bilayer. Residues 1060–1096 (DRIKLFGMPAKHQPDLIYLRYVPLWKVHVFTVVQLTC) are Extracellular-facing. Phosphoserine occurs at positions 1067 and 1078. Residues 1097–1117 (LVLLWVIKASAAAVVFPMMVL) traverse the membrane as a helical segment. The interval 1118-1140 (ALVFVRKLMDLCFTKRELSWLDD) is essential for interaction with RACK1. Topologically, residues 1118 to 1218 (ALVFVRKLMD…KKYMDAETSL (101 aa)) are cytoplasmic. The interval 1138–1140 (LDD) is CA2-binding. The segment covering 1148 to 1165 (KKEDDKKKKEKEEAERML) has biased composition (basic and acidic residues). A disordered region spans residues 1148–1172 (KKEDDKKKKEKEEAERMLQGDGDTV). Residue threonine 1171 is modified to Phosphothreonine. A phosphoserine mark is found at serine 1180, threonine 1188, isoleucine 1201, and serine 1217. Residues 1215–1218 (ETSL) carry the PDZ-binding motif.

The protein belongs to the anion exchanger (TC 2.A.31) family. Interacts with USH1C. Forms a complex with ATP6V1B1 and NHERF1/EBP50. Interacts in a pH dependent-manner with CA2/carbonic anhydrase 2. Interacts with CFTR probably through NHERF1/EBP50. As to quaternary structure, interacts with RACK1. In terms of processing, undergoes lysosome-mediated degradation. Post-translationally, N-glycosylated. As to expression, expressed in aorta, ventricles, atrium, mesenteric artery, kidney, spleen, duodenum, jejunum, ileum, colon, lung, trachea, gastric fundus and pylorus, cerebrum, cerebellum, pancreas, liver, parotid gland, and epididymis. Expressed in the inner ear by cochlear outer and inner hair cells (at protein level). Highly expressed in testis and spleen. In terms of tissue distribution, specifically expressed in kidney. Specifically expressed in hippocampal neurons.

Its subcellular location is the basolateral cell membrane. The protein localises to the apical cell membrane. The protein resides in the cell projection. It is found in the stereocilium. It localises to the cell membrane. It catalyses the reaction hydrogencarbonate(in) + Na(+)(in) = hydrogencarbonate(out) + Na(+)(out). Insensitive to stilbene derivatives. Electroneutral sodium- and bicarbonate-dependent cotransporter with a Na(+):HCO3(-) 1:1 stoichiometry. Mediates the sodium-dependent bicarbonate transport important for pH recovery after acid load as well as for regulation of steady-state pH in the duodenum and vascular smooth muscle cells. Plays a key role in macrophage acidification, mediating bicarbonate import into the cytoplasm which is crucial for net acid extrusion and maintenance of cytoplasmic pH during phagocytosis. Provides cellular bicarbonate for de novo purine and pyrimidine synthesis and is a key mediator of de novo nucleotide synthesis downstream of mTORC1 signaling in proliferating cells. The chain is Sodium bicarbonate cotransporter 3 (Slc4a7) from Rattus norvegicus (Rat).